A 359-amino-acid chain; its full sequence is Cytokine receptor-like factor 2 (359 aa).

An N-terminal signal peptide occupies residues M1–A19. Over A20–P232 the chain is Extracellular. N53 carries N-linked (GlcNAc...) asparagine glycosylation. C68 and C82 are disulfide-bonded. The region spanning P119 to A213 is the Fibronectin type-III domain. N122 is a glycosylation site (N-linked (GlcNAc...) asparagine). 2 disulfides stabilise this stretch: C168–C169 and C181–C219. Residues P201 to T205 carry the WSXWS motif motif. Residues L233–L253 form a helical membrane-spanning segment. Topologically, residues R254–L359 are cytoplasmic. The Box 1 motif motif lies at L262–S270. Residues K312 to P336 are disordered.

This sequence belongs to the type I cytokine receptor family. Type 5 subfamily. As to quaternary structure, the TSLP receptor is a heterodimer of CRLF2 and IL7R. Binding of TSLP to CRLF2/TSLPR is a mechanistic prerequisite for recruitment of IL7R to the high-affinity ternary complex. High level of expression in liver, lung and testis. Also expressed in heart, brain, spleen, thymus and bone marrow. Highly expressed in progenitors and myeloid cells. Isoform 2 is expressed in primary hemotopoietic cells.

The protein resides in the cell membrane. It localises to the secreted. Receptor for thymic stromal lymphopoietin (TSLP). Forms a functional complex with TSLP and IL7R which is capable of stimulating cell proliferation through activation of STAT3 and STAT5. Also activates JAK2. Implicated in the development of the hematopoietic system. This Mus musculus (Mouse) protein is Cytokine receptor-like factor 2 (Crlf2).